We begin with the raw amino-acid sequence, 157 residues long: Endoribonuclease YbeY (157 aa).

Zn(2+) contacts are provided by histidine 116, histidine 120, and histidine 126.

This sequence belongs to the endoribonuclease YbeY family. The cofactor is Zn(2+).

Its subcellular location is the cytoplasm. In terms of biological role, single strand-specific metallo-endoribonuclease involved in late-stage 70S ribosome quality control and in maturation of the 3' terminus of the 16S rRNA. The sequence is that of Endoribonuclease YbeY from Blochmanniella pennsylvanica (strain BPEN).